A 339-amino-acid chain; its full sequence is SVP1-like protein 2 (339 aa).

2 WD repeats span residues 177–217 (AHAN…LVRE) and 222–261 (LDRT…ENKR).

This sequence belongs to the WD repeat PROPPIN family.

It localises to the vacuole membrane. It is found in the cytoplasmic vesicle membrane. In terms of biological role, involved in mitochondrial or peroxisomal functions and amino acid signaling pathways. This Kluyveromyces lactis (strain ATCC 8585 / CBS 2359 / DSM 70799 / NBRC 1267 / NRRL Y-1140 / WM37) (Yeast) protein is SVP1-like protein 2 (HSV2).